Consider the following 148-residue polypeptide: MAETKVILTKTVSNLGHSGDVVDVKSGYARNYLFPQGLAFAWTKGAEAQIVAMKRARLAKAVATREDAVAAKAAIEGTTVEIAAKVSESGKLFGGISNEAIAVALSDKAAVNPKAIEVETIKTTGDFPAKVALHPEITASFFVKVVAE.

This sequence belongs to the bacterial ribosomal protein bL9 family.

In terms of biological role, binds to the 23S rRNA. The polypeptide is Large ribosomal subunit protein bL9 (Bifidobacterium longum (strain DJO10A)).